Here is a 152-residue protein sequence, read N- to C-terminus: Endoribonuclease YbeY (152 aa).

Zn(2+) is bound by residues His-116, His-120, and His-126.

It belongs to the endoribonuclease YbeY family. Zn(2+) serves as cofactor.

Its subcellular location is the cytoplasm. Its function is as follows. Single strand-specific metallo-endoribonuclease involved in late-stage 70S ribosome quality control and in maturation of the 3' terminus of the 16S rRNA. The sequence is that of Endoribonuclease YbeY from Mycoplasma mobile (strain ATCC 43663 / 163K / NCTC 11711) (Mesomycoplasma mobile).